Here is a 375-residue protein sequence, read N- to C-terminus: Queuine tRNA-ribosyltransferase (375 aa).

Asp89 functions as the Proton acceptor in the catalytic mechanism. Substrate contacts are provided by residues 89–93, Asp143, Gln187, and Gly214; that span reads DSGGF. The interval 245 to 251 is RNA binding; that stretch reads GVGKPED. Residue Asp264 is the Nucleophile of the active site. The RNA binding; important for wobble base 34 recognition stretch occupies residues 269–273; the sequence is TRNAR. Zn(2+)-binding residues include Cys302, Cys304, Cys307, and His333.

The protein belongs to the queuine tRNA-ribosyltransferase family. In terms of assembly, homodimer. Within each dimer, one monomer is responsible for RNA recognition and catalysis, while the other monomer binds to the replacement base PreQ1. The cofactor is Zn(2+).

It carries out the reaction 7-aminomethyl-7-carbaguanine + guanosine(34) in tRNA = 7-aminomethyl-7-carbaguanosine(34) in tRNA + guanine. The protein operates within tRNA modification; tRNA-queuosine biosynthesis. Catalyzes the base-exchange of a guanine (G) residue with the queuine precursor 7-aminomethyl-7-deazaguanine (PreQ1) at position 34 (anticodon wobble position) in tRNAs with GU(N) anticodons (tRNA-Asp, -Asn, -His and -Tyr). Catalysis occurs through a double-displacement mechanism. The nucleophile active site attacks the C1' of nucleotide 34 to detach the guanine base from the RNA, forming a covalent enzyme-RNA intermediate. The proton acceptor active site deprotonates the incoming PreQ1, allowing a nucleophilic attack on the C1' of the ribose to form the product. After dissociation, two additional enzymatic reactions on the tRNA convert PreQ1 to queuine (Q), resulting in the hypermodified nucleoside queuosine (7-(((4,5-cis-dihydroxy-2-cyclopenten-1-yl)amino)methyl)-7-deazaguanosine). The sequence is that of Queuine tRNA-ribosyltransferase from Salmonella arizonae (strain ATCC BAA-731 / CDC346-86 / RSK2980).